The chain runs to 286 residues: MTFSERFSAYARLTRLDKPIGILLLLWPTLWGLWLAADGMPDPMILVIFVLGTILMRSAGCAINDFADRKIDPHVSRTRNRPLATGIISSREALLVAAGLSLCAFLLILPLNLLTILLSVPALLLAISYPFTKRFFAMPQAYLGIAFSFGIPMAFAAQTGTVPPLAWLLVLANLFWVIAYDTEYALVDLADDLKIGIKTSAITFGRFDVAGILLCHITFLSILTYAGILLQRGIWFYGALLVALGLVIVQYTMIRNREPARCFQAFLHNNRVGAVIFAGILLDTLI.

A run of 7 helical transmembrane segments spans residues 20-40, 43-63, 83-103, 135-155, 160-180, 209-229, and 234-254; these read IGIL…ADGM, PMIL…GCAI, LATG…LSLC, FFAM…PMAF, GTVP…VIAY, VAGI…AGIL, and IWFY…YTMI.

This sequence belongs to the UbiA prenyltransferase family. Mg(2+) is required as a cofactor.

Its subcellular location is the cell inner membrane. The catalysed reaction is all-trans-octaprenyl diphosphate + 4-hydroxybenzoate = 4-hydroxy-3-(all-trans-octaprenyl)benzoate + diphosphate. Its pathway is cofactor biosynthesis; ubiquinone biosynthesis. Its function is as follows. Catalyzes the prenylation of para-hydroxybenzoate (PHB) with an all-trans polyprenyl group. Mediates the second step in the final reaction sequence of ubiquinone-8 (UQ-8) biosynthesis, which is the condensation of the polyisoprenoid side chain with PHB, generating the first membrane-bound Q intermediate 3-octaprenyl-4-hydroxybenzoate. This Nitrosomonas eutropha (strain DSM 101675 / C91 / Nm57) protein is 4-hydroxybenzoate octaprenyltransferase.